A 296-amino-acid chain; its full sequence is Nucleotide-binding protein Spy49_0545 (296 aa).

An ATP-binding site is contributed by 13-20 (GMSGAGKT). Residue 63-66 (DMRS) participates in GTP binding.

This sequence belongs to the RapZ-like family.

Displays ATPase and GTPase activities. The protein is Nucleotide-binding protein Spy49_0545 of Streptococcus pyogenes serotype M49 (strain NZ131).